Consider the following 445-residue polypeptide: Exodeoxyribonuclease 7 large subunit (445 aa).

The protein belongs to the XseA family. As to quaternary structure, heterooligomer composed of large and small subunits.

It is found in the cytoplasm. It catalyses the reaction Exonucleolytic cleavage in either 5'- to 3'- or 3'- to 5'-direction to yield nucleoside 5'-phosphates.. Its function is as follows. Bidirectionally degrades single-stranded DNA into large acid-insoluble oligonucleotides, which are then degraded further into small acid-soluble oligonucleotides. The chain is Exodeoxyribonuclease 7 large subunit from Staphylococcus aureus (strain USA300 / TCH1516).